We begin with the raw amino-acid sequence, 259 residues long: Indole-3-glycerol phosphate synthase (259 aa).

This sequence belongs to the TrpC family.

The catalysed reaction is 1-(2-carboxyphenylamino)-1-deoxy-D-ribulose 5-phosphate + H(+) = (1S,2R)-1-C-(indol-3-yl)glycerol 3-phosphate + CO2 + H2O. It participates in amino-acid biosynthesis; L-tryptophan biosynthesis; L-tryptophan from chorismate: step 4/5. The chain is Indole-3-glycerol phosphate synthase from Dehalococcoides mccartyi (strain ATCC BAA-2266 / KCTC 15142 / 195) (Dehalococcoides ethenogenes (strain 195)).